The sequence spans 247 residues: Probable transcriptional regulatory protein lpg1286 (247 aa).

It belongs to the TACO1 family.

Its subcellular location is the cytoplasm. This is Probable transcriptional regulatory protein lpg1286 from Legionella pneumophila subsp. pneumophila (strain Philadelphia 1 / ATCC 33152 / DSM 7513).